Reading from the N-terminus, the 267-residue chain is 4-hydroxy-tetrahydrodipicolinate reductase (267 aa).

NAD(+) contacts are provided by residues 8–13 (GAAGRM) and aspartate 34. Arginine 35 is an NADP(+) binding site. Residues 98–100 (GTT) and 122–125 (AANF) each bind NAD(+). Catalysis depends on histidine 155, which acts as the Proton donor/acceptor. Histidine 156 is a (S)-2,3,4,5-tetrahydrodipicolinate binding site. Residue lysine 159 is the Proton donor of the active site. 165–166 (GT) contacts (S)-2,3,4,5-tetrahydrodipicolinate.

Belongs to the DapB family.

The protein localises to the cytoplasm. It catalyses the reaction (S)-2,3,4,5-tetrahydrodipicolinate + NAD(+) + H2O = (2S,4S)-4-hydroxy-2,3,4,5-tetrahydrodipicolinate + NADH + H(+). The catalysed reaction is (S)-2,3,4,5-tetrahydrodipicolinate + NADP(+) + H2O = (2S,4S)-4-hydroxy-2,3,4,5-tetrahydrodipicolinate + NADPH + H(+). Its pathway is amino-acid biosynthesis; L-lysine biosynthesis via DAP pathway; (S)-tetrahydrodipicolinate from L-aspartate: step 4/4. In terms of biological role, catalyzes the conversion of 4-hydroxy-tetrahydrodipicolinate (HTPA) to tetrahydrodipicolinate. The protein is 4-hydroxy-tetrahydrodipicolinate reductase of Pseudomonas amygdali pv. tabaci (Pseudomonas syringae pv. tabaci).